We begin with the raw amino-acid sequence, 152 residues long: SsrA-binding protein (152 aa).

This sequence belongs to the SmpB family.

Its subcellular location is the cytoplasm. In terms of biological role, required for rescue of stalled ribosomes mediated by trans-translation. Binds to transfer-messenger RNA (tmRNA), required for stable association of tmRNA with ribosomes. tmRNA and SmpB together mimic tRNA shape, replacing the anticodon stem-loop with SmpB. tmRNA is encoded by the ssrA gene; the 2 termini fold to resemble tRNA(Ala) and it encodes a 'tag peptide', a short internal open reading frame. During trans-translation Ala-aminoacylated tmRNA acts like a tRNA, entering the A-site of stalled ribosomes, displacing the stalled mRNA. The ribosome then switches to translate the ORF on the tmRNA; the nascent peptide is terminated with the 'tag peptide' encoded by the tmRNA and targeted for degradation. The ribosome is freed to recommence translation, which seems to be the essential function of trans-translation. This is SsrA-binding protein from Rickettsia canadensis (strain McKiel).